The chain runs to 155 residues: Troponin C, body wall muscle (155 aa).

N-acetylvaline is present on valine 1. 4 EF-hand domains span residues aspartate 7–asparagine 43, proline 44–alanine 79, arginine 88–asparagine 121, and valine 122–glutamine 155. Ca(2+)-binding residues include aspartate 57, aspartate 59, serine 61, threonine 63, and glutamate 68. Aspartate 135, asparagine 137, aspartate 139, glutamine 141, and glutamate 146 together coordinate Ca(2+).

It belongs to the troponin C family.

Troponin is the central regulatory protein of muscle contraction. Tn consists of three components: Tn-I which is the inhibitor of actomyosin ATPase, Tn-T which contains the binding site for tropomyosin and Tn-C. The binding of calcium to Tn-C abolishes the inhibitory action of Tn on actin filaments. This chain is Troponin C, body wall muscle, found in Halocynthia roretzi (Sea squirt).